A 75-amino-acid polypeptide reads, in one-letter code: Small ribosomal subunit protein bS18 (75 aa).

Belongs to the bacterial ribosomal protein bS18 family. Part of the 30S ribosomal subunit. Forms a tight heterodimer with protein bS6.

Functionally, binds as a heterodimer with protein bS6 to the central domain of the 16S rRNA, where it helps stabilize the platform of the 30S subunit. The polypeptide is Small ribosomal subunit protein bS18 (Teredinibacter turnerae (strain ATCC 39867 / T7901)).